The following is a 274-amino-acid chain: HTH-type transcriptional regulator GadX (274 aa).

Residues 145–242 (TRVCTVINNN…GMTPTEYQER (98 aa)) enclose the HTH araC/xylS-type domain. 2 DNA-binding regions (H-T-H motif) span residues 162-183 (ARIA…REEE) and 209-232 (IKRV…RNYY).

As to quaternary structure, homodimer.

Positively regulates the expression of about fifteen genes involved in acid resistance such as gadA, gadB and gadC. Depending on the conditions (growth phase and medium), can repress gadW. The chain is HTH-type transcriptional regulator GadX (gadX) from Shigella flexneri.